Here is a 637-residue protein sequence, read N- to C-terminus: Biosynthetic arginine decarboxylase (637 aa).

At Lys-110 the chain carries N6-(pyridoxal phosphate)lysine. Position 290–300 (290–300 (IDVGGGLGVDY)) interacts with substrate.

The protein belongs to the Orn/Lys/Arg decarboxylase class-II family. SpeA subfamily. Mg(2+) serves as cofactor. The cofactor is pyridoxal 5'-phosphate.

The enzyme catalyses L-arginine + H(+) = agmatine + CO2. Functionally, catalyzes the biosynthesis of agmatine from arginine. The sequence is that of Biosynthetic arginine decarboxylase from Pseudomonas putida (strain ATCC 47054 / DSM 6125 / CFBP 8728 / NCIMB 11950 / KT2440).